Reading from the N-terminus, the 314-residue chain is Homoserine kinase (314 aa).

95–105 (PHSRGLGSSAA) contacts ATP.

The protein belongs to the GHMP kinase family. Homoserine kinase subfamily.

Its subcellular location is the cytoplasm. It catalyses the reaction L-homoserine + ATP = O-phospho-L-homoserine + ADP + H(+). It functions in the pathway amino-acid biosynthesis; L-threonine biosynthesis; L-threonine from L-aspartate: step 4/5. Its function is as follows. Catalyzes the ATP-dependent phosphorylation of L-homoserine to L-homoserine phosphate. This is Homoserine kinase from Mycobacterium sp. (strain KMS).